A 381-amino-acid polypeptide reads, in one-letter code: Heme A synthase (381 aa).

5 helical membrane-spanning segments follow: residues 25–45, 112–132, 138–158, 176–196, and 212–232; these read GAVR…VAVG, LLGR…WWRG, LLLG…IGWI, LALH…LAAG, and VAGL…LVAG. Residue His-277 participates in heme binding. 3 helical membrane passes run 279-299, 307-327, and 329-349; these read LFAY…VRMA, AMGV…TLLL, and VPLW…IMAT. His-337 contributes to the heme binding site.

Belongs to the COX15/CtaA family. Type 2 subfamily. As to quaternary structure, interacts with CtaB. Heme b is required as a cofactor.

It localises to the cell membrane. The catalysed reaction is Fe(II)-heme o + 2 A + H2O = Fe(II)-heme a + 2 AH2. The protein operates within porphyrin-containing compound metabolism; heme A biosynthesis; heme A from heme O: step 1/1. Its function is as follows. Catalyzes the conversion of heme O to heme A by two successive hydroxylations of the methyl group at C8. The first hydroxylation forms heme I, the second hydroxylation results in an unstable dihydroxymethyl group, which spontaneously dehydrates, resulting in the formyl group of heme A. This is Heme A synthase from Methylorubrum populi (strain ATCC BAA-705 / NCIMB 13946 / BJ001) (Methylobacterium populi).